The primary structure comprises 601 residues: Chaperone protein DnaK (601 aa).

A Phosphothreonine; by autocatalysis modification is found at threonine 175. A disordered region spans residues 570–601 (FAQKAASKETSKNEQNEDGSIDAEIKEEDPKA). Residues 575–584 (ASKETSKNEQ) show a composition bias toward basic and acidic residues. The segment covering 585–601 (NEDGSIDAEIKEEDPKA) has biased composition (acidic residues).

This sequence belongs to the heat shock protein 70 family.

In terms of biological role, acts as a chaperone. This chain is Chaperone protein DnaK, found in Mycoplasma mobile (strain ATCC 43663 / 163K / NCTC 11711) (Mesomycoplasma mobile).